The following is a 407-amino-acid chain: Peptidase T (407 aa).

Residue His-82 participates in Zn(2+) binding. The active site involves Asp-84. Position 143 (Asp-143) interacts with Zn(2+). Glu-177 (proton acceptor) is an active-site residue. Residues Glu-178, Asp-200, and His-382 each contribute to the Zn(2+) site.

Belongs to the peptidase M20B family. Zn(2+) serves as cofactor.

It is found in the cytoplasm. It catalyses the reaction Release of the N-terminal residue from a tripeptide.. Its function is as follows. Cleaves the N-terminal amino acid of tripeptides. The protein is Peptidase T of Streptococcus thermophilus (strain CNRZ 1066).